The primary structure comprises 231 residues: dTTP/UTP pyrophosphatase (231 aa).

D85 acts as the Proton acceptor in catalysis.

It belongs to the Maf family. YhdE subfamily. Requires a divalent metal cation as cofactor.

It localises to the cytoplasm. The enzyme catalyses dTTP + H2O = dTMP + diphosphate + H(+). The catalysed reaction is UTP + H2O = UMP + diphosphate + H(+). In terms of biological role, nucleoside triphosphate pyrophosphatase that hydrolyzes dTTP and UTP. May have a dual role in cell division arrest and in preventing the incorporation of modified nucleotides into cellular nucleic acids. This is dTTP/UTP pyrophosphatase from Psychrobacter arcticus (strain DSM 17307 / VKM B-2377 / 273-4).